The sequence spans 140 residues: Small ribosomal subunit protein uS12 (140 aa).

The segment at 1–28 (MPTINQLVRKSRKALEKKSTAPALQKGY) is disordered. D102 is subject to 3-methylthioaspartic acid. The tract at residues 119 to 140 (GVDKRRQSRSKYGAKRPKEAKK) is disordered. The segment covering 124-140 (RQSRSKYGAKRPKEAKK) has biased composition (basic residues).

The protein belongs to the universal ribosomal protein uS12 family. In terms of assembly, part of the 30S ribosomal subunit. Contacts proteins S8 and S17. May interact with IF1 in the 30S initiation complex.

Its function is as follows. With S4 and S5 plays an important role in translational accuracy. Functionally, interacts with and stabilizes bases of the 16S rRNA that are involved in tRNA selection in the A site and with the mRNA backbone. Located at the interface of the 30S and 50S subunits, it traverses the body of the 30S subunit contacting proteins on the other side and probably holding the rRNA structure together. The combined cluster of proteins S8, S12 and S17 appears to hold together the shoulder and platform of the 30S subunit. In Clostridioides difficile (strain 630) (Peptoclostridium difficile), this protein is Small ribosomal subunit protein uS12.